Here is a 393-residue protein sequence, read N- to C-terminus: S-adenosylmethionine synthase (393 aa).

His17 lines the ATP pocket. Mg(2+) is bound at residue Asp19. Glu45 is a K(+) binding site. Positions 58 and 104 each coordinate L-methionine. Positions 104-114 are flexible loop; it reads QSAEIAQGVEE. ATP is bound by residues 171-173, Asp245, 251-252, Ala268, and Lys272; these read DAK and RK. Residue Asp245 coordinates L-methionine. Position 276 (Lys276) interacts with L-methionine.

The protein belongs to the AdoMet synthase family. As to quaternary structure, homotetramer; dimer of dimers. Mg(2+) is required as a cofactor. K(+) serves as cofactor.

The protein resides in the cytoplasm. It carries out the reaction L-methionine + ATP + H2O = S-adenosyl-L-methionine + phosphate + diphosphate. It participates in amino-acid biosynthesis; S-adenosyl-L-methionine biosynthesis; S-adenosyl-L-methionine from L-methionine: step 1/1. Catalyzes the formation of S-adenosylmethionine (AdoMet) from methionine and ATP. The overall synthetic reaction is composed of two sequential steps, AdoMet formation and the subsequent tripolyphosphate hydrolysis which occurs prior to release of AdoMet from the enzyme. This is S-adenosylmethionine synthase from Hyphomonas neptunium (strain ATCC 15444).